A 407-amino-acid polypeptide reads, in one-letter code: 12S rRNA N(4)-cytidine methyltransferase METTL15 (407 aa).

S-adenosyl-L-methionine-binding positions include 100–102, D119, F146, D169, and Q176; that span reads GGH. The residue at position 358 (S358) is a Phosphoserine.

The protein belongs to the methyltransferase superfamily. RsmH family.

Its subcellular location is the mitochondrion matrix. It catalyses the reaction cytidine(839) in 12S rRNA + S-adenosyl-L-methionine = N(4)-methylcytidine(839) in 12S rRNA + S-adenosyl-L-homocysteine + H(+). Functionally, N4-methylcytidine (m4C) methyltransferase responsible for the methylation of position C839 in mitochondrial 12S rRNA. Involved in the stabilization of 12S rRNA folding, therefore facilitating the assembly of the mitochondrial small ribosomal subunits. This chain is 12S rRNA N(4)-cytidine methyltransferase METTL15, found in Homo sapiens (Human).